We begin with the raw amino-acid sequence, 325 residues long: MLSLRPPCTLSPAPWRRRRTLHGAAGTPQRVSVAAPSAIVEAVSPPARFSFPILVNGCTGKMGLSVAEAVTSSGLHLVPISFSSRDTLDRTVRVGHTDVRIYGPSAREDVLSSVIDEFPDVVVVDYTAPDSVNANAELYCKLGLPFVMGTTGGDRQLLYKSVQDSNNYALISPQMGKQVVAFLAAMEIMAEQFPGAFSGYHLEVLESHQAGKLDISGTAKAVIACFEKLGVSYDMNRMVKIRDPEQQLEMVGVPEEHIEGHAFHLYHLTSPDDSVSFEFQHNVCGRSIYAEGSVDAAMFLHRKVRSNDSKRIYDMIDVLREGSMR.

The N-terminal 32 residues, 1–32, are a transit peptide targeting the chloroplast; that stretch reads MLSLRPPCTLSPAPWRRRRTLHGAAGTPQRVS. NAD(+)-binding positions include 57-62, 149-151, and 172-175; these read GCTGKM, GTT, and SPQM. Residue H208 is the Proton donor/acceptor of the active site. K212 serves as the catalytic Proton donor. 217–218 is a binding site for (S)-2,3,4,5-tetrahydrodipicolinate; it reads GT.

This sequence belongs to the DapB family.

It localises to the plastid. Its subcellular location is the chloroplast. The catalysed reaction is (S)-2,3,4,5-tetrahydrodipicolinate + NAD(+) + H2O = (2S,4S)-4-hydroxy-2,3,4,5-tetrahydrodipicolinate + NADH + H(+). It carries out the reaction (S)-2,3,4,5-tetrahydrodipicolinate + NADP(+) + H2O = (2S,4S)-4-hydroxy-2,3,4,5-tetrahydrodipicolinate + NADPH + H(+). It participates in amino-acid biosynthesis; L-lysine biosynthesis via DAP pathway; (S)-tetrahydrodipicolinate from L-aspartate: step 4/4. In terms of biological role, catalyzes the conversion of 4-hydroxy-tetrahydrodipicolinate (HTPA) to tetrahydrodipicolinate. This chain is Probable 4-hydroxy-tetrahydrodipicolinate reductase 2, chloroplastic (DAPB2), found in Oryza sativa subsp. japonica (Rice).